A 331-amino-acid chain; its full sequence is Ferrochelatase (331 aa).

His187 and Glu286 together coordinate Fe cation.

This sequence belongs to the ferrochelatase family.

The protein resides in the cytoplasm. It carries out the reaction heme b + 2 H(+) = protoporphyrin IX + Fe(2+). It participates in porphyrin-containing compound metabolism; protoheme biosynthesis; protoheme from protoporphyrin-IX: step 1/1. Its function is as follows. Catalyzes the ferrous insertion into protoporphyrin IX. This Legionella pneumophila (strain Corby) protein is Ferrochelatase.